The sequence spans 810 residues: Zinc finger CCCH domain-containing protein 11A (810 aa).

3 C3H1-type zinc fingers span residues 2-29, 31-57, and 60-86; these read PNQGEDCYFFFYSTCTKGDSCPFRHCEA, IGNETVCTLWQEGRCFRQVCRFRHMEI, and KRSEIPCYWENQPTGCQKLNCAFHHNR. Position 108 is a phosphoserine (Ser108). Residues Lys114 and Lys124 each participate in a glycyl lysine isopeptide (Lys-Gly) (interchain with G-Cter in SUMO2) cross-link. Position 132 is a phosphoserine (Ser132). 4 disordered regions span residues 139–194, 223–258, 285–351, and 367–432; these read MKVE…GLRV, KKMKEKSKKQGEGSSGVSSLLLHPEPVPGPEKENVR, GKRK…DKVN, and ERAS…TTCI. Lys140 is covalently cross-linked (Glycyl lysine isopeptide (Lys-Gly) (interchain with G-Cter in SUMO2)). Ser149 and Ser171 each carry phosphoserine. Positions 160-175 are enriched in acidic residues; it reads ADDDEDDDDQFSEEGD. Ser290 is subject to Phosphoserine. Composition is skewed to basic and acidic residues over residues 309 to 322 and 367 to 390; these read KKVEAPETNIDKTP and ERASQKRGELQTKLKTEGPSKTDD. A Phosphothreonine modification is found at Thr321. Residues 362–423 are a coiled coil; that stretch reads EEILLERASQ…KHRQQEAERQ (62 aa). Ser370 is subject to Phosphoserine. Positions 391–402 are enriched in polar residues; it reads STSGARSSSTIR. Basic and acidic residues predominate over residues 417–432; sequence QQEAERQKSKKDTTCI. Lys478 participates in a covalent cross-link: Glycyl lysine isopeptide (Lys-Gly) (interchain with G-Cter in SUMO2). A disordered region spans residues 482–549; it reads ALRVQQSSES…KEASGETTGV (68 aa). Positions 486–498 are enriched in low complexity; the sequence is QQSSESSTSSPSQ. Lys619 participates in a covalent cross-link: Glycyl lysine isopeptide (Lys-Gly) (interchain with G-Cter in SUMO2). Residues 715-768 are disordered; the sequence is TVPEAENPRDSLVLPPTQSSSDSSPPEVSGPSSSQMSMKTRRLSSASTGKPPLS. Positions 729–748 are enriched in low complexity; it reads PPTQSSSDSSPPEVSGPSSS. The span at 749-762 shows a compositional bias: polar residues; that stretch reads QMSMKTRRLSSAST.

Interacts with TREX complex components THOC2, DDX39 and POLDIP3; the interactions are ATP-dependent. Interacts with PABPN1; this interaction retains ZC3H11A in nuclear speckles. Interacts with KPNA3.

Its subcellular location is the nucleus. It is found in the nucleus speckle. In terms of biological role, through its association with TREX complex components, may participate in the export and post-transcriptional coordination of selected mRNA transcripts, including those required to maintain the metabolic processes in embryonic cells. Binds RNA. (Microbial infection) Plays a role in efficient growth of several nuclear-replicating viruses such as HIV-1, influenza virus or herpes simplex virus 1/HHV-1. Required for efficient viral mRNA export. May be required for proper polyadenylation of adenovirus type 5/HAdV-5 capsid mRNA. The chain is Zinc finger CCCH domain-containing protein 11A (ZC3H11A) from Homo sapiens (Human).